The sequence spans 87 residues: Alpha-toxin To2 (87 aa).

The first 20 residues, 1–20 (MIRFVLFISCFFLIGTVVEC), serve as a signal peptide directing secretion. The 63-residue stretch at 22–84 (KDGYLMEGDG…IWDSKNNKCG (63 aa)) folds into the LCN-type CS-alpha/beta domain. Cystine bridges form between Cys-32–Cys-83, Cys-36–Cys-58, Cys-44–Cys-64, and Cys-48–Cys-66. Position 85 is a lysine amide (Lys-85).

In terms of tissue distribution, expressed by the venom gland.

It is found in the secreted. In terms of biological role, alpha toxins bind voltage-independently at site-3 of sodium channels (Nav) and inhibit the inactivation of the activated channels, thereby blocking neuronal transmission. Affects the tetrodotoxin-sensitive sodium current permeability of F-11 rat neuroblastoma cells. Produces a dose dependent increase in amplitude and duration of the current. The polypeptide is Alpha-toxin To2 (Tityus obscurus (Amazonian scorpion)).